The primary structure comprises 83 residues: Small ribosomal subunit protein eS21 (83 aa).

Belongs to the eukaryotic ribosomal protein eS21 family. In terms of assembly, component of the 40S small ribosomal subunit. Interacts with sta.

The protein resides in the cytoplasm. The protein localises to the cytosol. It is found in the rough endoplasmic reticulum. May be an associated component of the ribosome rather than a core structural subunit. May act as a translation initiation factor. Has a role in regulation of cell proliferation in the hematopoietic organs and the imaginal disks of larva. The chain is Small ribosomal subunit protein eS21 (RpS21) from Drosophila simulans (Fruit fly).